The primary structure comprises 256 residues: Ribonuclease 3 (256 aa).

An RNase III domain is found at 3–125 (LEALQQRLGY…IFGAVFLDGG (123 aa)). E38 serves as a coordination point for Mg(2+). D42 is a catalytic residue. D111 and E114 together coordinate Mg(2+). E114 is a catalytic residue. Residues 152–222 (DAKTLLQEYL…AKLALEEAHR (71 aa)) form the DRBM domain. The tract at residues 227-256 (LVKRSRAERTGKTRKQATPPDPQLSLRLKE) is disordered.

It belongs to the ribonuclease III family. In terms of assembly, homodimer. Requires Mg(2+) as cofactor.

The protein localises to the cytoplasm. The catalysed reaction is Endonucleolytic cleavage to 5'-phosphomonoester.. Its function is as follows. Digests double-stranded RNA. Involved in the processing of primary rRNA transcript to yield the immediate precursors to the large and small rRNAs (23S and 16S). Processes some mRNAs, and tRNAs when they are encoded in the rRNA operon. Processes pre-crRNA and tracrRNA of type II CRISPR loci if present in the organism. This Ralstonia nicotianae (strain ATCC BAA-1114 / GMI1000) (Ralstonia solanacearum) protein is Ribonuclease 3.